The sequence spans 264 residues: 5'-nucleotidase SurE (264 aa).

Asp10, Asp11, Ser43, and Asn97 together coordinate a divalent metal cation.

It belongs to the SurE nucleotidase family. The cofactor is a divalent metal cation.

It is found in the cytoplasm. It carries out the reaction a ribonucleoside 5'-phosphate + H2O = a ribonucleoside + phosphate. In terms of biological role, nucleotidase that shows phosphatase activity on nucleoside 5'-monophosphates. This Sulfurimonas denitrificans (strain ATCC 33889 / DSM 1251) (Thiomicrospira denitrificans (strain ATCC 33889 / DSM 1251)) protein is 5'-nucleotidase SurE.